The following is a 25-amino-acid chain: Aurein-5.1 (25 aa).

Belongs to the frog skin active peptide (FSAP) family. Aurein subfamily. Expressed by the skin dorsal glands.

The protein localises to the secreted. Has no antimicrobial or anticancer activity. The chain is Aurein-5.1 from Ranoidea aurea (Green and golden bell frog).